The primary structure comprises 213 residues: ATP phosphoribosyltransferase (213 aa).

It belongs to the ATP phosphoribosyltransferase family. Short subfamily. In terms of assembly, heteromultimer composed of HisG and HisZ subunits.

Its subcellular location is the cytoplasm. The enzyme catalyses 1-(5-phospho-beta-D-ribosyl)-ATP + diphosphate = 5-phospho-alpha-D-ribose 1-diphosphate + ATP. It functions in the pathway amino-acid biosynthesis; L-histidine biosynthesis; L-histidine from 5-phospho-alpha-D-ribose 1-diphosphate: step 1/9. In terms of biological role, catalyzes the condensation of ATP and 5-phosphoribose 1-diphosphate to form N'-(5'-phosphoribosyl)-ATP (PR-ATP). Has a crucial role in the pathway because the rate of histidine biosynthesis seems to be controlled primarily by regulation of HisG enzymatic activity. The sequence is that of ATP phosphoribosyltransferase from Anoxybacillus flavithermus (strain DSM 21510 / WK1).